A 101-amino-acid chain; its full sequence is MPSLLFCGPKLAACGIVLSVWGVIMLSMLGIFFSAKSAVLIEDVPFTEEDIRNDKDPPQIIYGLYNQVGINCFIAAAIYVGVGAVSLCQVRLNKRQEYMVT.

Transmembrane regions (helical) follow at residues 13 to 33 (ACGI…GIFF) and 68 to 88 (VGIN…VSLC).

Belongs to the RNase K family.

It is found in the membrane. Functionally, endoribonuclease which preferentially cleaves ApU and ApG phosphodiester bonds. The polypeptide is Ribonuclease kappa-B (rnasekb) (Danio rerio (Zebrafish)).